A 447-amino-acid polypeptide reads, in one-letter code: UPF0210 protein lhv_0606 (447 aa).

Belongs to the UPF0210 family. As to quaternary structure, homodimer.

The sequence is that of UPF0210 protein lhv_0606 from Lactobacillus helveticus (strain DPC 4571).